A 549-amino-acid polypeptide reads, in one-letter code: ATP synthase subunit alpha (549 aa).

172 to 179 provides a ligand contact to ATP; sequence GDRKTGKT. The disordered stretch occupies residues 513–549; sequence SSTGESVVPDEHVEAMDEEDLGKESVKVKKPAPQKKK. Residues 540–549 show a composition bias toward basic residues; sequence VKKPAPQKKK.

It belongs to the ATPase alpha/beta chains family. In terms of assembly, F-type ATPases have 2 components, CF(1) - the catalytic core - and CF(0) - the membrane proton channel. CF(1) has five subunits: alpha(3), beta(3), gamma(1), delta(1), epsilon(1). CF(0) has three main subunits: a(1), b(2) and c(9-12). The alpha and beta chains form an alternating ring which encloses part of the gamma chain. CF(1) is attached to CF(0) by a central stalk formed by the gamma and epsilon chains, while a peripheral stalk is formed by the delta and b chains.

It is found in the cell membrane. It carries out the reaction ATP + H2O + 4 H(+)(in) = ADP + phosphate + 5 H(+)(out). Produces ATP from ADP in the presence of a proton gradient across the membrane. The alpha chain is a regulatory subunit. The protein is ATP synthase subunit alpha of Mycobacterium marinum (strain ATCC BAA-535 / M).